The sequence spans 649 residues: Pesticidal crystal protein Cry3Ca (649 aa).

A compositionally biased stretch (basic and acidic residues) spans 1 to 13 (MNPNNRSEHDTIK). The tract at residues 1-29 (MNPNNRSEHDTIKATENNEVSNNHAQYPL) is disordered. The segment covering 14–25 (ATENNEVSNNHA) has biased composition (polar residues).

It belongs to the delta endotoxin family.

In terms of biological role, promotes colloidosmotic lysis by binding to the midgut epithelial cells of Coleoptera. The sequence is that of Pesticidal crystal protein Cry3Ca (cry3Ca) from Bacillus thuringiensis subsp. kurstaki.